The following is a 246-amino-acid chain: Sulfate transporter CysZ (246 aa).

4 helical membrane-spanning segments follow: residues 24-44 (LFVL…IGFA), 69-89 (IVWP…FTMV), 148-168 (LLVL…WILF), and 214-234 (LLIP…ATLF).

The protein belongs to the CysZ family.

Its subcellular location is the cell inner membrane. Its function is as follows. High affinity, high specificity proton-dependent sulfate transporter, which mediates sulfate uptake. Provides the sulfur source for the cysteine synthesis pathway. This is Sulfate transporter CysZ from Pseudomonas aeruginosa (strain LESB58).